Here is a 78-residue protein sequence, read N- to C-terminus: MSDTAERVKKIVIEHLGVDADKVTEQASFIDDLGADSLDTVELVMAFEEEFGVEIPDDAAETILTVGDAVKYIDKASA.

The Carrier domain maps to 2-77 (SDTAERVKKI…DAVKYIDKAS (76 aa)). An O-(pantetheine 4'-phosphoryl)serine modification is found at Ser37.

This sequence belongs to the acyl carrier protein (ACP) family. 4'-phosphopantetheine is transferred from CoA to a specific serine of apo-ACP by AcpS. This modification is essential for activity because fatty acids are bound in thioester linkage to the sulfhydryl of the prosthetic group.

The protein resides in the cytoplasm. It functions in the pathway lipid metabolism; fatty acid biosynthesis. Its function is as follows. Carrier of the growing fatty acid chain in fatty acid biosynthesis. The polypeptide is Acyl carrier protein AcpP (Mesorhizobium japonicum (strain LMG 29417 / CECT 9101 / MAFF 303099) (Mesorhizobium loti (strain MAFF 303099))).